The chain runs to 79 residues: Moronecidin (79 aa).

Positions 1–22 (MKCATLSLVLSMVVLMAEPGDA) are cleaved as a signal peptide. A Glycine amide modification is found at glycine 44. A disordered region spans residues 45 to 68 (GKAEQDQQDQQYQQDQQDQQAQQY). A propeptide spanning residues 47–79 (AEQDQQDQQYQQDQQDQQAQQYQRFNRERAAFD) is cleaved from the precursor. A compositionally biased stretch (low complexity) spans 52-68 (QDQQYQQDQQDQQAQQY).

As to expression, expressed in gill, skin, intestine, spleen, anterior kidney, and blood cells.

Its subcellular location is the secreted. In terms of biological role, antimicrobial peptide with broad-spectrum activity against Gram-positive and Gram-negative bacteria as well as against a variety of fungi. Rapidly inactivates both channel catfish herpesvirus (ED(50)=4 uM) and frog virus 3 (ED(50)=13 uM) over a wide temperature range. Seems to disrupt the membranes by adopting an alpha helical conformation. The chain is Moronecidin from Morone chrysops (White bass).